The primary structure comprises 207 residues: Guanylate kinase (207 aa).

A Guanylate kinase-like domain is found at 4-184 (GTLYIVSAPS…ALMDFKAIIR (181 aa)). 11–18 (APSGAGKS) is a binding site for ATP.

It belongs to the guanylate kinase family.

It localises to the cytoplasm. The catalysed reaction is GMP + ATP = GDP + ADP. The enzyme catalyses dZMP + ATP = dZDP + ADP. The protein operates within purine metabolism. In terms of biological role, essential for recycling GMP and indirectly, cGMP. Functionally, (Microbial infection) Catalyzes the phosphorylation of dZMP to dZDP, when the bacterium is infected by a phage that produces the substrate for the synthesis of dZTP (2- amino-2'-deoxyadenosine 5'-triphosphate), which is then used by the phage as a DNA polymerase substrate. This Vibrio cholerae serotype O1 (strain ATCC 39315 / El Tor Inaba N16961) protein is Guanylate kinase (gmk).